A 476-amino-acid polypeptide reads, in one-letter code: Glutamate--tRNA ligase (476 aa).

The 'HIGH' region signature appears at 8–18; that stretch reads PSPTGTLHIGT. A 'KMSKS' region motif is present at residues 247-251; sequence KLSKR. ATP is bound at residue lysine 250.

This sequence belongs to the class-I aminoacyl-tRNA synthetase family. Glutamate--tRNA ligase type 1 subfamily. As to quaternary structure, monomer.

It localises to the cytoplasm. It catalyses the reaction tRNA(Glu) + L-glutamate + ATP = L-glutamyl-tRNA(Glu) + AMP + diphosphate. Its function is as follows. Catalyzes the attachment of glutamate to tRNA(Glu) in a two-step reaction: glutamate is first activated by ATP to form Glu-AMP and then transferred to the acceptor end of tRNA(Glu). In Synechococcus sp. (strain WH7803), this protein is Glutamate--tRNA ligase.